We begin with the raw amino-acid sequence, 202 residues long: LexA repressor (202 aa).

The segment at residues Arg-28 to Lys-48 is a DNA-binding region (H-T-H motif). Active-site for autocatalytic cleavage activity residues include Ser-119 and Lys-156.

It belongs to the peptidase S24 family. In terms of assembly, homodimer.

It catalyses the reaction Hydrolysis of Ala-|-Gly bond in repressor LexA.. In terms of biological role, represses a number of genes involved in the response to DNA damage (SOS response), including recA and lexA. Binds to the 16 bp palindromic sequence 5'-CTGTATATATATACAG-3'. In the presence of single-stranded DNA, RecA interacts with LexA causing an autocatalytic cleavage which disrupts the DNA-binding part of LexA, leading to derepression of the SOS regulon and eventually DNA repair. This Escherichia fergusonii (strain ATCC 35469 / DSM 13698 / CCUG 18766 / IAM 14443 / JCM 21226 / LMG 7866 / NBRC 102419 / NCTC 12128 / CDC 0568-73) protein is LexA repressor.